We begin with the raw amino-acid sequence, 512 residues long: Na(+)/H(+) antiporter NhaB (512 aa).

11 helical membrane passes run 28 to 48 (FLII…WLLV), 52 to 72 (IFTL…LLAI), 97 to 117 (LLLM…LFIF), 144 to 164 (FLDA…FYGI), 201 to 221 (LMMH…VGEP), 237 to 257 (FFLR…LTCF), 296 to 330 (LALI…IILA), 347 to 367 (TEAL…AVII), 390 to 410 (LFYL…VGSV), 446 to 466 (ATPN…APLI), and 474 to 494 (VWMA…CVKF).

It belongs to the NhaB Na(+)/H(+) (TC 2.A.34) antiporter family.

Its subcellular location is the cell inner membrane. It catalyses the reaction 2 Na(+)(in) + 3 H(+)(out) = 2 Na(+)(out) + 3 H(+)(in). In terms of biological role, na(+)/H(+) antiporter that extrudes sodium in exchange for external protons. The protein is Na(+)/H(+) antiporter NhaB of Enterobacter sp. (strain 638).